Here is a 283-residue protein sequence, read N- to C-terminus: Thymidylate synthase (283 aa).

Position 22 (R22) interacts with dUMP. C160 serves as the catalytic Nucleophile. DUMP contacts are provided by residues 180–183 (RSCD), N191, and 221–223 (HIY). D183 contacts (6R)-5,10-methylene-5,6,7,8-tetrahydrofolate. Position 282 (S282) interacts with (6R)-5,10-methylene-5,6,7,8-tetrahydrofolate.

It belongs to the thymidylate synthase family. Bacterial-type ThyA subfamily. As to quaternary structure, homodimer.

The protein resides in the cytoplasm. It carries out the reaction dUMP + (6R)-5,10-methylene-5,6,7,8-tetrahydrofolate = 7,8-dihydrofolate + dTMP. Its pathway is pyrimidine metabolism; dTTP biosynthesis. Functionally, catalyzes the reductive methylation of 2'-deoxyuridine-5'-monophosphate (dUMP) to 2'-deoxythymidine-5'-monophosphate (dTMP) while utilizing 5,10-methylenetetrahydrofolate (mTHF) as the methyl donor and reductant in the reaction, yielding dihydrofolate (DHF) as a by-product. This enzymatic reaction provides an intracellular de novo source of dTMP, an essential precursor for DNA biosynthesis. The polypeptide is Thymidylate synthase (Vibrio atlanticus (strain LGP32) (Vibrio splendidus (strain Mel32))).